The sequence spans 185 residues: Photosystem I assembly protein Ycf4 (185 aa).

The next 2 helical transmembrane spans lie at 24 to 44 and 66 to 86; these read YIIG…SISS and IIMG…WYLV.

The protein belongs to the Ycf4 family.

It localises to the cellular thylakoid membrane. Functionally, seems to be required for the assembly of the photosystem I complex. The polypeptide is Photosystem I assembly protein Ycf4 (Prochlorococcus marinus (strain AS9601)).